A 558-amino-acid polypeptide reads, in one-letter code: Arginine--tRNA ligase (558 aa).

A 'HIGH' region motif is present at residues 119 to 129 (ANPDGPLHVGH).

It belongs to the class-I aminoacyl-tRNA synthetase family.

It localises to the cytoplasm. The enzyme catalyses tRNA(Arg) + L-arginine + ATP = L-arginyl-tRNA(Arg) + AMP + diphosphate. This is Arginine--tRNA ligase from Methanothrix thermoacetophila (strain DSM 6194 / JCM 14653 / NBRC 101360 / PT) (Methanosaeta thermophila).